Reading from the N-terminus, the 555-residue chain is Chaperonin GroEL (555 aa).

ATP contacts are provided by residues 29–32 (TLGP), K50, 86–90 (DGTTT), G418, and D499. Residues 528-555 (HEEDNNTGNRSGGGVGGGHHGGMGGMDF) are disordered. A compositionally biased stretch (gly residues) spans 537–555 (RSGGGVGGGHHGGMGGMDF).

Belongs to the chaperonin (HSP60) family. Forms a cylinder of 14 subunits composed of two heptameric rings stacked back-to-back. Interacts with the co-chaperonin GroES.

The protein resides in the cytoplasm. It catalyses the reaction ATP + H2O + a folded polypeptide = ADP + phosphate + an unfolded polypeptide.. Functionally, together with its co-chaperonin GroES, plays an essential role in assisting protein folding. The GroEL-GroES system forms a nano-cage that allows encapsulation of the non-native substrate proteins and provides a physical environment optimized to promote and accelerate protein folding. The polypeptide is Chaperonin GroEL (Orientia tsutsugamushi (Rickettsia tsutsugamushi)).